A 346-amino-acid chain; its full sequence is Protease inhibitor Egf1.5b (346 aa).

The first 28 residues, 1–28 (MYIDTGIMSNNIFLFAFFALVGLTRIEA), serve as a signal peptide directing secretion. Residues 52–104 (CRENEHYNSTRIECEDECNDRNNKLCYRFQQFCWCNEGYIRNSSHICVKLEDC) enclose the TIL domain.

This sequence belongs to the polydnaviridae EGF-like motif protein family. Interacts with host PAP1, PAP3 and SPH2.

Functionally, counteracts the host humoral immune response by inhibiting the processing and the amidolytic activity of host PAP1 and PAP3. Thereby, melanization of host hemolymph, normally producing several reactive intermediates toxic for viruses, is deregulated and proper immune response cannot occur. In Microplitis demolitor (Parasitoid wasp), this protein is Protease inhibitor Egf1.5b (O5).